We begin with the raw amino-acid sequence, 474 residues long: MTILTYPFKNLPTASKWALRFSIRPLSCSSQLRAAPAVQTKTKKTLAKPNIRNVVVVDGVRTPFLLSGTSYKDLMPHDLARAALTGLLHRTSVPKEVVDYIIFGTVIQEVKTSNVAREAALGAGFSDKTPAHTVTMACISANQAMTTGVGLIASGQCDVIVAGGVELMSDVPIRHSRKMRKLMLDLNKAKSMGQRLSLISKFRFNFLAPELPAVSEFSTSETMGHSADRLAAAFAVSRLEQDEYALRSHSLAKKAQDEGLLSDVVPFKVPGKDTVTKDNGIRPSSLEQMAKLKPAFIKPYGTVTAANSSFLTDGASAMLIMAEEKALAMGYKPKAYLRDFMYVSQDPKDQLLLGPTYATPKVLEKAGLTMNDIDAFEFHEAFSGQILANFKAMDSDWFAENYMGRKTKVGLPPLEKFNNWGGSLSLGHPFGATGCRLVMAAANRLRKEGGQYGLVAACAAGGQGHAMIVEAYPK.

The transit peptide at 1–33 (MTILTYPFKNLPTASKWALRFSIRPLSCSSQLR) directs the protein to the mitochondrion. The residue at position 72 (K72) is an N6-acetyllysine; alternate. An N6-succinyllysine; alternate modification is found at K72. Catalysis depends on C138, which acts as the Acyl-thioester intermediate. Residues 173 to 220 (IRHSRKMRKLMLDLNKAKSMGQRLSLISKFRFNFLAPELPAVSEFSTS) lie within the membrane without spanning it. K188 is modified (N6-acetyllysine; alternate). At K188 the chain carries N6-succinyllysine; alternate. N6-succinyllysine is present on residues K190, K272, and K291. K293 is subject to N6-acetyllysine; alternate. K293 carries the N6-succinyllysine; alternate modification. K298 bears the N6-acetyllysine mark. An N6-acetyllysine; alternate modification is found at K332. N6-succinyllysine; alternate is present on K332. K348 and K361 each carry N6-acetyllysine. The Proton donor/acceptor role is filled by C458.

This sequence belongs to the thiolase-like superfamily. Thiolase family. In terms of assembly, heterotetramer of 2 alpha/HADHA and 2 beta/HADHB subunits; forms the mitochondrial trifunctional enzyme. Also purified as higher order heterooligomers including a 4 alpha/HADHA and 4 beta/HADHB heterooligomer which physiological significance remains unclear. The mitochondrial trifunctional enzyme interacts with MTLN. Interacts with RSAD2/viperin.

The protein localises to the mitochondrion. The protein resides in the mitochondrion inner membrane. It is found in the mitochondrion outer membrane. Its subcellular location is the endoplasmic reticulum. The enzyme catalyses an acyl-CoA + acetyl-CoA = a 3-oxoacyl-CoA + CoA. It catalyses the reaction butanoyl-CoA + acetyl-CoA = 3-oxohexanoyl-CoA + CoA. It carries out the reaction hexanoyl-CoA + acetyl-CoA = 3-oxooctanoyl-CoA + CoA. The catalysed reaction is octanoyl-CoA + acetyl-CoA = 3-oxodecanoyl-CoA + CoA. The enzyme catalyses decanoyl-CoA + acetyl-CoA = 3-oxododecanoyl-CoA + CoA. It catalyses the reaction dodecanoyl-CoA + acetyl-CoA = 3-oxotetradecanoyl-CoA + CoA. It carries out the reaction tetradecanoyl-CoA + acetyl-CoA = 3-oxohexadecanoyl-CoA + CoA. The protein operates within lipid metabolism; fatty acid beta-oxidation. Mitochondrial trifunctional enzyme catalyzes the last three of the four reactions of the mitochondrial beta-oxidation pathway. The mitochondrial beta-oxidation pathway is the major energy-producing process in tissues and is performed through four consecutive reactions breaking down fatty acids into acetyl-CoA. Among the enzymes involved in this pathway, the trifunctional enzyme exhibits specificity for long-chain fatty acids. Mitochondrial trifunctional enzyme is a heterotetrameric complex composed of two proteins, the trifunctional enzyme subunit alpha/HADHA carries the 2,3-enoyl-CoA hydratase and the 3-hydroxyacyl-CoA dehydrogenase activities, while the trifunctional enzyme subunit beta/HADHB described here bears the 3-ketoacyl-CoA thiolase activity. The protein is Trifunctional enzyme subunit beta, mitochondrial (HADHB) of Homo sapiens (Human).